A 180-amino-acid chain; its full sequence is Pro-glucagon (180 aa).

A signal peptide spans 1–20 (MKSIYFVAGLFVMLVQGSWQ). A disordered region spans residues 23-56 (LQDTEEKPRSFSTSQTDLLDDPDQMNEDKRHSQG). Ser54 is modified (phosphoserine). Positions 84–89 (NRNEIA) are excised as a propeptide. Phosphoserine occurs at positions 105 and 108. An Arginine amide modification is found at Arg127. Positions 131–145 (DFPEEVTIVEELRRR) are excised as a propeptide. Ser150 and Ser152 each carry phosphoserine.

The protein belongs to the glucagon family. Proglucagon is post-translationally processed in a tissue-specific manner in pancreatic A cells and intestinal L cells. In pancreatic A cells, the major bioactive hormone is glucagon cleaved by PCSK2/PC2. In the intestinal L cells PCSK1/PC1 liberates GLP-1, GLP-2, glicentin and oxyntomodulin. GLP-1 is further N-terminally truncated by post-translational processing in the intestinal L cells resulting in GLP-1(7-37) GLP-1-(7-36)amide. The C-terminal amidation is neither important for the metabolism of GLP-1 nor for its effects on the endocrine pancreas. Glucagon is secreted in the A cells of the islets of Langerhans. GLP-1, GLP-2, oxyntomodulin and glicentin are secreted from enteroendocrine cells throughout the gastrointestinal tract. GLP-1 and GLP-2 are also secreted in selected neurons in the brain.

It localises to the secreted. Functionally, plays a key role in glucose metabolism and homeostasis. Regulates blood glucose by increasing gluconeogenesis and decreasing glycolysis. A counterregulatory hormone of insulin, raises plasma glucose levels in response to insulin-induced hypoglycemia. Plays an important role in initiating and maintaining hyperglycemic conditions in diabetes. Potent stimulator of glucose-dependent insulin release. Also stimulates insulin release in response to IL6. Plays important roles on gastric motility and the suppression of plasma glucagon levels. May be involved in the suppression of satiety and stimulation of glucose disposal in peripheral tissues, independent of the actions of insulin. Has growth-promoting activities on intestinal epithelium. May also regulate the hypothalamic pituitary axis (HPA) via effects on LH, TSH, CRH, oxytocin, and vasopressin secretion. Increases islet mass through stimulation of islet neogenesis and pancreatic beta cell proliferation. Inhibits beta cell apoptosis. In terms of biological role, stimulates intestinal growth and up-regulates villus height in the small intestine, concomitant with increased crypt cell proliferation and decreased enterocyte apoptosis. The gastrointestinal tract, from the stomach to the colon is the principal target for GLP-2 action. Plays a key role in nutrient homeostasis, enhancing nutrient assimilation through enhanced gastrointestinal function, as well as increasing nutrient disposal. Stimulates intestinal glucose transport and decreases mucosal permeability. Its function is as follows. Significantly reduces food intake. Inhibits gastric emptying in humans. Suppression of gastric emptying may lead to increased gastric distension, which may contribute to satiety by causing a sensation of fullness. Functionally, may modulate gastric acid secretion and the gastro-pyloro-duodenal activity. May play an important role in intestinal mucosal growth in the early period of life. The protein is Pro-glucagon (GCG) of Octodon degus (Degu).